We begin with the raw amino-acid sequence, 36 residues long: Potassium channel toxin alpha-KTx 16.5 (36 aa).

3 disulfides stabilise this stretch: Cys-7–Cys-28, Cys-13–Cys-33, and Cys-17–Cys-35. The interaction with Ca(2+)-activated K(+) channels stretch occupies residues 26 to 33; it reads GKCQNKQC.

Belongs to the short scorpion toxin superfamily. Potassium channel inhibitor family. Alpha-KTx 16 subfamily. Expressed by the venom gland.

The protein resides in the secreted. Its function is as follows. Augments responses to direct muscle stimulation probably by blocking calcium-activated potassium channels. This Leiurus hebraeus (Hebrew deathstalker scorpion) protein is Potassium channel toxin alpha-KTx 16.5.